A 429-amino-acid chain; its full sequence is Histidinol dehydrogenase (429 aa).

3 residues coordinate NAD(+): Y131, Q193, and N216. Positions 239, 261, and 264 each coordinate substrate. The Zn(2+) site is built by Q261 and H264. Catalysis depends on proton acceptor residues E327 and H328. Substrate-binding residues include H328, D361, E415, and H420. Residue D361 coordinates Zn(2+). H420 lines the Zn(2+) pocket.

This sequence belongs to the histidinol dehydrogenase family. Zn(2+) serves as cofactor.

The catalysed reaction is L-histidinol + 2 NAD(+) + H2O = L-histidine + 2 NADH + 3 H(+). Its pathway is amino-acid biosynthesis; L-histidine biosynthesis; L-histidine from 5-phospho-alpha-D-ribose 1-diphosphate: step 9/9. Its function is as follows. Catalyzes the sequential NAD-dependent oxidations of L-histidinol to L-histidinaldehyde and then to L-histidine. In Methanocaldococcus jannaschii (strain ATCC 43067 / DSM 2661 / JAL-1 / JCM 10045 / NBRC 100440) (Methanococcus jannaschii), this protein is Histidinol dehydrogenase (hisD).